The primary structure comprises 103 residues: ATP synthase subunit H, mitochondrial (103 aa).

Residues 1 to 26 (MSRILKSLSRSYSTTSPRLYVDVVQG) constitute a mitochondrion transit peptide.

Belongs to the ATPase h subunit family. F-type ATPases have 2 components, CF(1) - the catalytic core - and CF(0) - the membrane proton channel.

The protein resides in the mitochondrion. Its subcellular location is the mitochondrion inner membrane. Mitochondrial membrane ATP synthase (F(1)F(0) ATP synthase or Complex V) produces ATP from ADP in the presence of a proton gradient across the membrane which is generated by electron transport complexes of the respiratory chain. F-type ATPases consist of two structural domains, F(1) - containing the extramembraneous catalytic core and F(0) - containing the membrane proton channel, linked together by a central stalk and a peripheral stalk. During catalysis, ATP synthesis in the catalytic domain of F(1) is coupled via a rotary mechanism of the central stalk subunits to proton translocation. Part of the complex F(0) domain. Minor subunit located with subunit a in the membrane. The chain is ATP synthase subunit H, mitochondrial (atp14) from Schizosaccharomyces pombe (strain 972 / ATCC 24843) (Fission yeast).